Here is a 679-residue protein sequence, read N- to C-terminus: DNA-directed RNA polymerase subunit beta' (679 aa).

4 residues coordinate Zn(2+): cysteine 69, cysteine 71, cysteine 84, and cysteine 87. 3 residues coordinate Mg(2+): aspartate 486, aspartate 488, and aspartate 490.

Belongs to the RNA polymerase beta' chain family. RpoC1 subfamily. In plastids the minimal PEP RNA polymerase catalytic core is composed of four subunits: alpha, beta, beta', and beta''. When a (nuclear-encoded) sigma factor is associated with the core the holoenzyme is formed, which can initiate transcription. It depends on Mg(2+) as a cofactor. Zn(2+) serves as cofactor.

The protein localises to the plastid. It localises to the chloroplast. It catalyses the reaction RNA(n) + a ribonucleoside 5'-triphosphate = RNA(n+1) + diphosphate. Its function is as follows. DNA-dependent RNA polymerase catalyzes the transcription of DNA into RNA using the four ribonucleoside triphosphates as substrates. The sequence is that of DNA-directed RNA polymerase subunit beta' from Physcomitrium patens (Spreading-leaved earth moss).